We begin with the raw amino-acid sequence, 145 residues long: uncharacterized protein (145 aa).

Helical transmembrane passes span 3–23 (VGII…GIGG), 83–103 (YVID…YLVP), and 105–125 (LSLL…MLWI).

Its subcellular location is the cell membrane. This is an uncharacterized protein from Methanocaldococcus jannaschii (strain ATCC 43067 / DSM 2661 / JAL-1 / JCM 10045 / NBRC 100440) (Methanococcus jannaschii).